Reading from the N-terminus, the 245-residue chain is NLP effector protein Pc118551 (245 aa).

A signal peptide spans 1–19; sequence MNLRAFLLSAVAALVAVQA. The Hepta-peptide GHRHDWE motif signature appears at 121-127; sequence QRRHLWE. Asn140 carries N-linked (GlcNAc...) asparagine glycosylation.

Belongs to the Necrosis inducing protein (NPP1) family.

Its subcellular location is the secreted. In terms of biological role, secreted effector that contributes strongly to virulence during infection by P.capsici. The chain is NLP effector protein Pc118551 from Phytophthora capsici.